A 385-amino-acid polypeptide reads, in one-letter code: Acetoin utilization protein AcuC (385 aa).

The protein belongs to the histone deacetylase family.

It functions in the pathway ketone degradation; acetoin degradation. Role in growth on acetoin or butanediol. Involved in the breakdown of these compounds used as a carbon source. This chain is Acetoin utilization protein AcuC (acuC), found in Staphylococcus xylosus.